A 552-amino-acid chain; its full sequence is Putative transport protein ECA4401 (552 aa).

5 helical membrane-spanning segments follow: residues 4–24 (IALTVSMLALVAVLGLWIGNW), 26–46 (IYGVGLGIGGVLFGGIIVGHV), 65–85 (FGLILFVYTIGIQVGPGFFSS), 90–112 (GLRLNAFALLTVFLGSVVTVMLH), and 158–178 (TGYAMAYPLGICGILLVMWLM). 2 consecutive RCK C-terminal domains span residues 191 to 276 (KQFE…VIGN) and 279 to 361 (ETSL…IVGN). The next 6 helical transmembrane spans lie at 371–391 (MLPVFIGIGLGVLLGSVPLMV), 393–413 (GFPVALRLGLAGGPLVVALVL), 439–459 (IVLFLSVVGLKSGGDFVDTLL), 464–484 (VWWIGYGALITIVPLLAVGIL), 493–513 (YLTLCGMLAGSMTDPPALAFA), and 530–550 (VYPLAMFLRIMSPQLLAVLFL).

Belongs to the AAE transporter (TC 2.A.81) family. YidE subfamily.

Its subcellular location is the cell membrane. The polypeptide is Putative transport protein ECA4401 (Pectobacterium atrosepticum (strain SCRI 1043 / ATCC BAA-672) (Erwinia carotovora subsp. atroseptica)).